A 266-amino-acid chain; its full sequence is 3-methyl-2-oxobutanoate hydroxymethyltransferase (266 aa).

Mg(2+)-binding residues include aspartate 45 and aspartate 84. 3-methyl-2-oxobutanoate contacts are provided by residues 45–46 (DS), aspartate 84, and lysine 112. Mg(2+) is bound at residue glutamate 114. Glutamate 181 serves as the catalytic Proton acceptor.

This sequence belongs to the PanB family. In terms of assembly, homodecamer; pentamer of dimers. Mg(2+) is required as a cofactor.

The protein localises to the cytoplasm. It carries out the reaction 3-methyl-2-oxobutanoate + (6R)-5,10-methylene-5,6,7,8-tetrahydrofolate + H2O = 2-dehydropantoate + (6S)-5,6,7,8-tetrahydrofolate. Its pathway is cofactor biosynthesis; (R)-pantothenate biosynthesis; (R)-pantoate from 3-methyl-2-oxobutanoate: step 1/2. Catalyzes the reversible reaction in which hydroxymethyl group from 5,10-methylenetetrahydrofolate is transferred onto alpha-ketoisovalerate to form ketopantoate. This chain is 3-methyl-2-oxobutanoate hydroxymethyltransferase, found in Pseudomonas fluorescens (strain SBW25).